We begin with the raw amino-acid sequence, 640 residues long: Sodium-dependent nutrient amino acid transporter 1 (640 aa).

Low complexity predominate over residues 1–13; it reads MELKPNGNHNNNN. A disordered region spans residues 1-25; sequence MELKPNGNHNNNNAAEKSEDTEKAK. Over 1–30 the chain is Cytoplasmic; that stretch reads MELKPNGNHNNNNAAEKSEDTEKAKAERTN. Basic and acidic residues predominate over residues 16–25; the sequence is EKSEDTEKAK. The next 3 helical transmembrane spans lie at 31 to 51, 64 to 84, and 117 to 137; these read WGNG…LGNV, GAFL…MYYL, and TICI…YLFV. 3 N-linked (GlcNAc...) asparagine glycosylation sites follow: asparagine 174, asparagine 181, and asparagine 197. 9 helical membrane passes run 228–248, 257–277, 306–326, 340–360, 400–420, 447–467, 473–493, 515–535, and 551–571; these read PDWK…LVIM, AAYF…IRAV, AVVQ…MFAS, IVTT…FAIL, LFSV…IVAL, CGFL…LTLV, TYVV…IYGL, CWSF…MVTI, and VAGW…GLWY.

It belongs to the sodium:neurotransmitter symporter (SNF) (TC 2.A.22) family.

It localises to the membrane. Functionally, unusual broad substrate spectrum amino acid:sodium cotransporter that promotes absorption of the D isomers of essential amino acids. Neutral amino acids are the preferred substrates, especially methionine and phenylalanine. The protein is Sodium-dependent nutrient amino acid transporter 1 of Drosophila ananassae (Fruit fly).